Here is a 206-residue protein sequence, read N- to C-terminus: Pyridoxine/pyridoxamine 5'-phosphate oxidase (206 aa).

Residues 53 to 58 (RMVLLK), 68 to 69 (YT), lysine 75, and glutamine 97 contribute to the FMN site. Residue lysine 58 participates in substrate binding. Substrate is bound by residues tyrosine 115, arginine 119, and serine 123. FMN contacts are provided by residues 132-133 (QS) and tryptophan 177. 183-185 (RLH) provides a ligand contact to substrate. Arginine 187 is an FMN binding site.

This sequence belongs to the pyridoxamine 5'-phosphate oxidase family. In terms of assembly, homodimer. FMN is required as a cofactor.

It carries out the reaction pyridoxamine 5'-phosphate + O2 + H2O = pyridoxal 5'-phosphate + H2O2 + NH4(+). It catalyses the reaction pyridoxine 5'-phosphate + O2 = pyridoxal 5'-phosphate + H2O2. Its pathway is cofactor metabolism; pyridoxal 5'-phosphate salvage; pyridoxal 5'-phosphate from pyridoxamine 5'-phosphate: step 1/1. It participates in cofactor metabolism; pyridoxal 5'-phosphate salvage; pyridoxal 5'-phosphate from pyridoxine 5'-phosphate: step 1/1. In terms of biological role, catalyzes the oxidation of either pyridoxine 5'-phosphate (PNP) or pyridoxamine 5'-phosphate (PMP) into pyridoxal 5'-phosphate (PLP). This Rhizobium leguminosarum bv. trifolii (strain WSM2304) protein is Pyridoxine/pyridoxamine 5'-phosphate oxidase.